We begin with the raw amino-acid sequence, 704 residues long: Mannan-binding lectin serine protease 1 (704 aa).

The first 24 residues, 1–24 (MRFLSFWRLLLYHALCLALPEVSA), serve as a signal peptide directing secretion. Positions 25-143 (HTVELNEMFG…TGFDAHYMAV (119 aa)) constitute a CUB 1 domain. The tract at residues 25–189 (HTVELNEMFG…HTDNRTCRVE (165 aa)) is homodimerization. The segment at 25–189 (HTVELNEMFG…HTDNRTCRVE (165 aa)) is interaction with MBL2. Residues 25-283 (HTVELNEMFG…STQTHSVQIL (259 aa)) form an interaction with FCN2 region. The interaction with MBL1 stretch occupies residues 25–305 (HTVELNEMFG…RLSYRAAGNE (281 aa)). Residue Asn-54 is glycosylated (N-linked (GlcNAc...) asparagine). Positions 73, 81, 126, 128, 144, 145, and 147 each coordinate Ca(2+). A disulfide bond links Cys-78 and Cys-96. The EGF-like; calcium-binding domain occupies 144-187 (DVDECKEREDEELSCDHYCHNYIGGYYCSCRFGYILHTDNRTCR). Disulfide bonds link Cys-148–Cys-162, Cys-158–Cys-171, Cys-173–Cys-186, and Cys-190–Cys-217. Asn-164, Tyr-165, and Gly-168 together coordinate Ca(2+). A (3R)-3-hydroxyasparagine modification is found at Asn-164. Asn-183 is a glycosylation site (N-linked (GlcNAc...) asparagine). In terms of domain architecture, CUB 2 spans 190-302 (CSGNLFTQRT…RGWRLSYRAA (113 aa)). Ca(2+)-binding residues include Glu-240, Asp-250, Asp-287, and Ser-289. Cys-247 and Cys-265 are disulfide-bonded. Sushi domains are found at residues 304–369 (NECP…TCKI) and 370–439 (VDCG…TCLP). 8 disulfides stabilise this stretch: Cys-306–Cys-354, Cys-334–Cys-367, Cys-372–Cys-419, Cys-402–Cys-437, Cys-441–Cys-577, Cys-480–Cys-496, Cys-619–Cys-636, and Cys-647–Cys-677. Asn-390 and Asn-412 each carry an N-linked (GlcNAc...) asparagine glycan. The Peptidase S1 domain maps to 454–701 (IFNGRPAQKG…NKDWIQRITG (248 aa)). Active-site charge relay system residues include His-495 and Asp-557. Ser-651 (charge relay system) is an active-site residue.

The protein belongs to the peptidase S1 family. In terms of assembly, homodimer. Interacts with the oligomeric lectins MBL2, FCN2 and FCN3; triggers the lectin pathway of complement through activation of C3. Interacts with SERPING1. Interacts with COLEC11; probably triggers the lectin pathway of complement. Post-translationally, the iron and 2-oxoglutarate dependent 3-hydroxylation of aspartate and asparagine is (R) stereospecific within EGF domains. N-glycosylated. Some N-linked glycan are of the complex-type. In terms of processing, autoproteolytic processing of the proenzyme produces the active enzyme composed on the heavy and the light chain held together by a disulfide bond. Isoform 1 but not isoform 2 is activated through autoproteolytic processing. In terms of tissue distribution, protein of the plasma which is primarily expressed by liver.

The protein resides in the secreted. With respect to regulation, inhibited by SERPING1 and A2M. Its function is as follows. Functions in the lectin pathway of complement, which performs a key role in innate immunity by recognizing pathogens through patterns of sugar moieties and neutralizing them. The lectin pathway is triggered upon binding of mannan-binding lectin (MBL) and ficolins to sugar moieties which leads to activation of the associated proteases MASP1 and MASP2. Functions as an endopeptidase and may activate MASP2 or C2 or directly activate C3 the key component of complement reaction. Isoform 2 may have an inhibitory effect on the activation of the lectin pathway of complement or may cleave IGFBP5. Also plays a role in development. The polypeptide is Mannan-binding lectin serine protease 1 (Masp1) (Mus musculus (Mouse)).